Reading from the N-terminus, the 1633-residue chain is Laminin-like protein lam-2 (1633 aa).

The first 19 residues, 1 to 19 (MTSILWLFSLAVLWHMGQP), serve as a signal peptide directing secretion. Residues 47 to 286 (QPQRCVPDFV…AISDFAVGGR (240 aa)) enclose the Laminin N-terminal domain. Residues Asn-116 and Asn-136 are each glycosylated (N-linked (GlcNAc...) asparagine). Cystine bridges form between Cys-287-Cys-296, Cys-289-Cys-310, Cys-312-Cys-321, Cys-324-Cys-344, Cys-347-Cys-356, Cys-349-Cys-372, Cys-375-Cys-384, Cys-387-Cys-400, Cys-403-Cys-415, Cys-405-Cys-421, Cys-423-Cys-432, Cys-435-Cys-447, Cys-450-Cys-464, Cys-452-Cys-471, Cys-473-Cys-482, and Cys-485-Cys-500. 4 consecutive Laminin EGF-like domains span residues 287 to 346 (CKCN…ECIA), 347 to 402 (CNCS…YCVA), 403 to 449 (CGCN…GCKN), and 450 to 502 (CGCE…GCTP). Residue Asn-348 is glycosylated (N-linked (GlcNAc...) asparagine). Positions 503-512 (CFCFGHSSIC) constitute a Laminin EGF-like 5; first part domain. Residues Asn-522, Asn-658, and Asn-740 are each glycosylated (N-linked (GlcNAc...) asparagine). One can recognise a Laminin IV type A domain in the interval 529–701 (QDKQKWAGQN…NPKQATWIEH (173 aa)). Positions 702 to 747 (CECLPGFVGQFCESCESGFRRETKFGGPFNHCIKCDCHNHSNSCEA) constitute a Laminin EGF-like 5; second part domain. 23 disulfides stabilise this stretch: Cys-736–Cys-745, Cys-738–Cys-752, Cys-754–Cys-763, Cys-766–Cys-782, Cys-785–Cys-803, Cys-806–Cys-815, Cys-818–Cys-832, Cys-835–Cys-849, Cys-837–Cys-856, Cys-859–Cys-868, Cys-871–Cys-887, Cys-890–Cys-909, Cys-892–Cys-916, Cys-918–Cys-927, Cys-930–Cys-943, Cys-946–Cys-958, Cys-948–Cys-965, Cys-967–Cys-976, Cys-979–Cys-991, Cys-994–Cys-1006, Cys-996–Cys-1013, Cys-1015–Cys-1024, and Cys-1027–Cys-1038. A Laminin EGF-like 6; truncated domain is found at 752-784 (CICEHNTAGDTCERCARGYYGDALQGTEEDCQK). 5 consecutive Laminin EGF-like domains span residues 785–834 (CPCP…ECVE), 835–889 (CACS…NCQS), 890–945 (CGCF…GCQE), 946–993 (CNCD…GCQP), and 994–1040 (CDCE…GCLP). Asn-936 carries N-linked (GlcNAc...) asparagine glycosylation. N-linked (GlcNAc...) asparagine glycans are attached at residues Asn-1077, Asn-1183, Asn-1226, Asn-1259, Asn-1336, Asn-1452, and Asn-1528.

In terms of biological role, during the formation of neuromuscular junctions at the larval stage, negatively regulates membrane protrusion from body wall muscles, probably downstream of the integrin complex formed by pat-2 and pat-3. In Caenorhabditis elegans, this protein is Laminin-like protein lam-2 (lam-2).